Reading from the N-terminus, the 349-residue chain is uncharacterized protein (349 aa).

A helical membrane pass occupies residues 17 to 37 (VIAIVSTGLVFAMTLVLTGLV). A disordered region spans residues 111–131 (FGAPEHGPGMPRVSDGRAPST). Transmembrane regions (helical) follow at residues 230 to 250 (AITV…GSVV), 284 to 304 (VVAL…APLF), and 308 to 328 (VVVP…IGLL).

It belongs to the ABC-4 integral membrane protein family.

The protein localises to the cell membrane. This is an uncharacterized protein from Mycobacterium bovis (strain ATCC BAA-935 / AF2122/97).